The primary structure comprises 420 residues: Reticulon-4 receptor-like 2 (420 aa).

The signal sequence occupies residues 1 to 30 (MLPGLRRLLQGPASACLLLTLLALPPVTPS). Intrachain disulfides connect C31–C37 and C35–C46. The LRRNT domain maps to 31–60 (CPMLCTCYSSPPTVSCQANNFSSVPLSLPP). The N-linked (GlcNAc...) asparagine glycan is linked to N50. LRR repeat units lie at residues 61 to 82 (STQR…TFGP), 83 to 104 (NLLT…TFRH), 107 to 129 (ALEE…TFQG), 132 to 153 (RLQS…IFRG), 156 to 177 (SLQY…LFAD), 180 to 201 (NLSH…VFRG), 204 to 225 (SLDR…AFHG), and 228 to 249 (RLTI…ALAD). N93 carries an N-linked (GlcNAc...) asparagine glycan. N-linked (GlcNAc...) asparagine glycosylation is present at N236. The LRRCT domain maps to 261–312 (NPWACDCRARPLWAWFQRARVSSSDVTCATPPERQGRDLRTLRDTDFQACPP). Intrachain disulfides connect C265-C288 and C267-C310. Residues 286 to 390 (VTCATPPERQ…GEQTCPGAAC (105 aa)) form a disordered region. The span at 294–306 (RQGRDLRTLRDTD) shows a compositional bias: basic and acidic residues. The interval 315 to 327 (PTRPGSRARGNSS) is important for interaction with MAG. Over residues 351-360 (LPAEDSRGRQ) the composition is skewed to basic and acidic residues. A lipid anchor (GPI-anchor amidated cysteine) is attached at C390. The propeptide at 391–420 (QAPADSRGPVLSAGLRTPLLCLLLLAPHHL) is removed in mature form.

The protein belongs to the Nogo receptor family. In terms of assembly, interaction with MAG is controversial, and may be indirect. Interacts with MAG. Does not interact with OMG and RTN4. Post-translationally, undergoes zinc metalloproteinase-mediated ectodomain shedding in neuroblastoma cells; is released both as a full-length ectodomain and an N-terminal fragment containing the leucine-rich repeat (LRR) region of the protein. In terms of processing, N-glycosylated. O-glycosylated. Contains terminal sialic acid groups on its glycan chains. Detected in adult brain, in neocortex, hippocampus, striatum and dorsal root ganglion neurons, and in retina (at protein level). In brain, detected in cerebral cortex and hippocampus. Weak or no expression detected in the cerebellum, thalamus or striatum.

The protein localises to the cell membrane. The protein resides in the cell projection. Its subcellular location is the dendrite. It localises to the perikaryon. It is found in the axon. The protein localises to the membrane raft. In terms of biological role, cell surface receptor that plays a functionally redundant role in the inhibition of neurite outgrowth mediated by MAG. Plays a functionally redundant role in postnatal brain development. Contributes to normal axon migration across the brain midline and normal formation of the corpus callosum. Does not seem to play a significant role in regulating axon regeneration in the adult central nervous system. Protects motoneurons against apoptosis; protection against apoptosis is probably mediated by MAG. Like other family members, plays a role in restricting the number dendritic spines and the number of synapses that are formed during brain development. Signaling mediates activation of Rho and downstream reorganization of the actin cytoskeleton. The sequence is that of Reticulon-4 receptor-like 2 from Rattus norvegicus (Rat).